A 251-amino-acid polypeptide reads, in one-letter code: uncharacterized protein (251 aa).

The a divalent metal cation site is built by His-6, His-8, Glu-90, His-130, His-154, and Asp-202.

This sequence belongs to the metallo-dependent hydrolases superfamily. TatD-type hydrolase family. It depends on a divalent metal cation as a cofactor.

This is an uncharacterized protein from Haemophilus influenzae (strain ATCC 51907 / DSM 11121 / KW20 / Rd).